The sequence spans 335 residues: Acetyl-coenzyme A carboxylase carboxyl transferase subunit alpha (335 aa).

Residues 48-308 form the CoA carboxyltransferase C-terminal domain; it reads TLEKKVEALR…KGILIEELSA (261 aa).

This sequence belongs to the AccA family. As to quaternary structure, acetyl-CoA carboxylase is a heterohexamer composed of biotin carboxyl carrier protein (AccB), biotin carboxylase (AccC) and two subunits each of ACCase subunit alpha (AccA) and ACCase subunit beta (AccD).

Its subcellular location is the cytoplasm. The catalysed reaction is N(6)-carboxybiotinyl-L-lysyl-[protein] + acetyl-CoA = N(6)-biotinyl-L-lysyl-[protein] + malonyl-CoA. It functions in the pathway lipid metabolism; malonyl-CoA biosynthesis; malonyl-CoA from acetyl-CoA: step 1/1. Component of the acetyl coenzyme A carboxylase (ACC) complex. First, biotin carboxylase catalyzes the carboxylation of biotin on its carrier protein (BCCP) and then the CO(2) group is transferred by the carboxyltransferase to acetyl-CoA to form malonyl-CoA. The protein is Acetyl-coenzyme A carboxylase carboxyl transferase subunit alpha of Chlorobium phaeovibrioides (strain DSM 265 / 1930) (Prosthecochloris vibrioformis (strain DSM 265)).